The primary structure comprises 169 residues: Sec-independent protein translocase protein TatB (169 aa).

The helical transmembrane segment at 2–22 (SPGIGMPELLVVLVLALVVVG) threads the bilayer. A disordered region spans residues 106-169 (NQAETDADKA…AKPVDEIKGR (64 aa)).

Belongs to the TatB family. As to quaternary structure, the Tat system comprises two distinct complexes: a TatABC complex, containing multiple copies of TatA, TatB and TatC subunits, and a separate TatA complex, containing only TatA subunits. Substrates initially bind to the TatABC complex, which probably triggers association of the separate TatA complex to form the active translocon.

The protein localises to the cell inner membrane. Functionally, part of the twin-arginine translocation (Tat) system that transports large folded proteins containing a characteristic twin-arginine motif in their signal peptide across membranes. Together with TatC, TatB is part of a receptor directly interacting with Tat signal peptides. TatB may form an oligomeric binding site that transiently accommodates folded Tat precursor proteins before their translocation. This chain is Sec-independent protein translocase protein TatB, found in Maricaulis maris (strain MCS10) (Caulobacter maris).